The primary structure comprises 810 residues: RING finger protein unkempt homolog (810 aa).

The interval 1–24 is disordered; that stretch reads MSKGPGPGGSAASSAPPAATAQVL. Low complexity predominate over residues 10–19; it reads SAASSAPPAA. 5 C3H1-type zinc fingers span residues 84–113, 124–154, 215–241, 251–285, and 293–321; these read YSPD…HRTT, YYKT…HGPH, NYKT…HNSK, KYRS…HTRT, and IYKS…HVEQ. The segment at 239–265 is disordered; sequence NSKDRRRSPRKHKYRSSPCPNVKHGDE. The residue at position 240 (Ser-240) is a Phosphoserine. The segment covering 241-253 has biased composition (basic residues); it reads KDRRRSPRKHKYR. The tract at residues 324-343 is disordered; sequence LSDDLQPSSTVSSPTQPGPV. A compositionally biased stretch (low complexity) spans 329–343; that stretch reads QPSSTVSSPTQPGPV. Phosphoserine occurs at positions 374, 378, and 385. Residues 569-585 are compositionally biased toward low complexity; sequence SASFHSASPSPPVSLSS. Positions 569-602 are disordered; it reads SASFHSASPSPPVSLSSHFLQQPQGHLSQSENTF. Over residues 586-602 the composition is skewed to polar residues; the sequence is HFLQQPQGHLSQSENTF. Ser-631 carries the post-translational modification Phosphoserine. Residues 643-723 are a coiled coil; that stretch reads GAAELARLRQ…QEELERLHSG (81 aa). Residues 766–801 form an RING-type; degenerate zinc finger; the sequence is SVKCLKCQEQNRAVLPCQHAVLCELCAEGSECPVCQ.

Belongs to the unkempt family.

It localises to the cytoplasm. Its function is as follows. Sequence-specific RNA-binding protein which plays an important role in the establishment and maintenance of the early morphology of cortical neurons during embryonic development. Acts as a translation repressor and controls a translationally regulated cell morphology program to ensure proper structuring of the nervous system. Translational control depends on recognition of its binding element within target mRNAs which consists of a mandatory UAG trimer upstream of a U/A-rich motif. Associated with polysomes. This Canis lupus familiaris (Dog) protein is RING finger protein unkempt homolog (UNK).